The sequence spans 217 residues: Membrane-associated progesterone receptor component 2 (217 aa).

The O-linked (Xyl...) (chondroitin sulfate) serine glycan is linked to Ser-15. The chain crosses the membrane as a helical span at residues 40–62; it reads ALLATGGEMLLNVALVALVLLGA. Residues Ser-84, Ser-98, and Ser-202 each carry the phosphoserine modification. The 100-residue stretch at 96-195 folds into the Cytochrome b5 heme-binding domain; the sequence is DFSLEQLRQY…EKYDYVGRLL (100 aa). A disordered region spans residues 196-217; sequence KPGEEPSEYTDEEDTKDHSKQD. The segment covering 200–209 has biased composition (acidic residues); that stretch reads EPSEYTDEED. Tyr-204 carries the phosphotyrosine modification. At Thr-205 the chain carries Phosphothreonine.

This sequence belongs to the cytochrome b5 family. MAPR subfamily. In terms of assembly, interacts with PGRMC1. Interacts with AAAS.

It localises to the membrane. Its subcellular location is the nucleus envelope. The protein localises to the endoplasmic reticulum. The protein resides in the secreted. Required for the maintenance of uterine histoarchitecture and normal female reproductive lifespan. May serve as a universal non-classical progesterone receptor in the uterus. Intracellular heme chaperone required for delivery of labile, or signaling heme, to the nucleus. Plays a role in adipocyte function and systemic glucose homeostasis. In brown fat, which has a high demand for heme, delivery of labile heme in the nucleus regulates the activity of heme-responsive transcriptional repressors such as NR1D1 and BACH1. The polypeptide is Membrane-associated progesterone receptor component 2 (Rattus norvegicus (Rat)).